The primary structure comprises 1596 residues: A-kinase anchor protein SPHKAP (1596 aa).

Disordered regions lie at residues 214–233, 242–319, 389–432, 462–481, and 760–809; these read KHGRLAGQRAAEDDTNRSVS, ASEQ…TPKQ, DNSE…GHPA, SGEEYECEDEEEESETDQGE, and EQSD…SSSS. Residues 292–306 show a composition bias toward polar residues; that stretch reads TLCTSSNSQKLSRTY. Over residues 462 to 479 the composition is skewed to acidic residues; it reads SGEEYECEDEEEESETDQ. The tract at residues 829 to 846 is PKA-RII subunit binding domain; that stretch reads FAEDLATTVVSMATELAA. Disordered regions lie at residues 958–1022, 1282–1310, and 1328–1443; these read VVDT…ISKQ, VGERRHGFKHSRCNNSGNRPGVEHQENSC, and VPLI…SSLG. The segment covering 959–971 has biased composition (polar residues); sequence VDTSKSGQSSRSR. A compositionally biased stretch (basic and acidic residues) spans 1333–1356; it reads IEPDQREEASEEKGGVETHHREAS. The span at 1357-1372 shows a compositional bias: polar residues; it reads HQTQQQSGKGSETATK. Low complexity-rich tracts occupy residues 1398–1409 and 1430–1443; these read LSASSEESGSGS and LSEGNGNSSTSSLG.

The protein belongs to the AKAP110 family.

It is found in the cytoplasm. Functionally, anchoring protein that mediates the subcellular compartmentation of cAMP-dependent protein kinase (PKA type II). The chain is A-kinase anchor protein SPHKAP (sphkap) from Danio rerio (Zebrafish).